Here is a 140-residue protein sequence, read N- to C-terminus: MAKKVVGIVKVRIPGGEATPAPPLGPALGQKQIQIAAFVKDFNAKTSKMKGQLLNTYITVYEDKTYTFVTKGTSTSTLIKKKLGIEKGSGEPNKTKVATINQKQLEEIAQEKMAYMSANDIEAAKKIVAGTARAMGIKVE.

Belongs to the universal ribosomal protein uL11 family. Part of the ribosomal stalk of the 50S ribosomal subunit. Interacts with L10 and the large rRNA to form the base of the stalk. L10 forms an elongated spine to which L12 dimers bind in a sequential fashion forming a multimeric L10(L12)X complex. Post-translationally, one or more lysine residues are methylated.

In terms of biological role, forms part of the ribosomal stalk which helps the ribosome interact with GTP-bound translation factors. The sequence is that of Large ribosomal subunit protein uL11 from Brachyspira hyodysenteriae (strain ATCC 49526 / WA1).